Consider the following 141-residue polypeptide: Acetyltransferase YPN_1354 (141 aa).

The 141-residue stretch at 1 to 141 (MEIRIFQQDD…GKRLIVDQEY (141 aa)) folds into the N-acetyltransferase domain.

Belongs to the acetyltransferase family. YpeA subfamily.

In Yersinia pestis bv. Antiqua (strain Nepal516), this protein is Acetyltransferase YPN_1354.